The primary structure comprises 138 residues: Putative pre-16S rRNA nuclease (138 aa).

The protein belongs to the YqgF nuclease family.

The protein resides in the cytoplasm. Its function is as follows. Could be a nuclease involved in processing of the 5'-end of pre-16S rRNA. The protein is Putative pre-16S rRNA nuclease of Klebsiella pneumoniae subsp. pneumoniae (strain ATCC 700721 / MGH 78578).